Consider the following 208-residue polypeptide: Thymidylate kinase (208 aa).

Position 12–19 (12–19 (GVDGAGKS)) interacts with ATP.

The protein belongs to the thymidylate kinase family.

It catalyses the reaction dTMP + ATP = dTDP + ADP. Functionally, phosphorylation of dTMP to form dTDP in both de novo and salvage pathways of dTTP synthesis. The sequence is that of Thymidylate kinase from Bordetella bronchiseptica (strain ATCC BAA-588 / NCTC 13252 / RB50) (Alcaligenes bronchisepticus).